The following is a 90-amino-acid chain: MAKANEHFFYVLKCNDNSYYGGYTTDVTRREAEHNAGIRCKYTKTRRPVKVIHFEKFETRSEATKAEAAFKKLSRKNKDSYLIEREEDSE.

One can recognise a GIY-YIG domain in the interval 5–83 (NEHFFYVLKC…SRKNKDSYLI (79 aa)).

It belongs to the UPF0213 family.

This Listeria welshimeri serovar 6b (strain ATCC 35897 / DSM 20650 / CCUG 15529 / CIP 8149 / NCTC 11857 / SLCC 5334 / V8) protein is UPF0213 protein lwe0147.